The primary structure comprises 609 residues: UvrABC system protein C (609 aa).

The 79-residue stretch at 16 to 94 (SSAGVYRMYD…IKQYMPRYNV (79 aa)) folds into the GIY-YIG domain. The region spanning 203 to 238 (QQVIATLVGKMEQAAMDLNYEDAARYRDQISALRRV) is the UVR domain.

Belongs to the UvrC family. Interacts with UvrB in an incision complex.

It localises to the cytoplasm. Its function is as follows. The UvrABC repair system catalyzes the recognition and processing of DNA lesions. UvrC both incises the 5' and 3' sides of the lesion. The N-terminal half is responsible for the 3' incision and the C-terminal half is responsible for the 5' incision. This Shewanella loihica (strain ATCC BAA-1088 / PV-4) protein is UvrABC system protein C.